Reading from the N-terminus, the 380-residue chain is Cytochrome b (380 aa).

4 helical membrane-spanning segments follow: residues 34-54 (FGSL…LLAT), 78-99 (WLIR…YLHI), 114-134 (WNTG…GYVL), and 179-199 (FFAL…IHLT). Heme b is bound by residues His84 and His98. His183 and His197 together coordinate heme b. A ubiquinone is bound at residue His202. Transmembrane regions (helical) follow at residues 227–247 (LKDI…ALFS), 289–309 (LGGV…PLLH), 321–341 (FSQF…WVGS), and 348–368 (FIII…LLFP).

The protein belongs to the cytochrome b family. As to quaternary structure, the cytochrome bc1 complex contains 11 subunits: 3 respiratory subunits (MT-CYB, CYC1 and UQCRFS1), 2 core proteins (UQCRC1 and UQCRC2) and 6 low-molecular weight proteins (UQCRH/QCR6, UQCRB/QCR7, UQCRQ/QCR8, UQCR10/QCR9, UQCR11/QCR10 and a cleavage product of UQCRFS1). This cytochrome bc1 complex then forms a dimer. Heme b is required as a cofactor.

The protein localises to the mitochondrion inner membrane. Its function is as follows. Component of the ubiquinol-cytochrome c reductase complex (complex III or cytochrome b-c1 complex) that is part of the mitochondrial respiratory chain. The b-c1 complex mediates electron transfer from ubiquinol to cytochrome c. Contributes to the generation of a proton gradient across the mitochondrial membrane that is then used for ATP synthesis. This chain is Cytochrome b (MT-CYB), found in Alle alle (Dovekie).